The sequence spans 670 residues: MSAETVNNYDYSDWYENAAPTKAPVEVIPPCDPTADEGLFHICIAAISLVVMLVLAILARRQKLSDNQRGLTGLLSPVNFLDHTQHKGLAVAVYGVLFCKLVGMVLSHHPLPFTKEVANKEFWMILALLYYPALYYPLLACGTLHNKVGYVLGSLLSWTHFGILVWQKVDCPKTPQIYKYYALFGSLPQIACLAFLSFQYPLLLFKGLQNTETANASEDLSSSYYRDYVKKILKKKKPTKISSSTSKPKLFDRLRDAVKSYIYTPEDVFRFPLKLAISVVVAFIALYQMALLLISGVLPTLHIVRRGVDENIAFLLAGFNIILSNDRQEVVRIVVYYLWCVEICYVSAVTLSCLVNLLMLMRSMVLHRSNLKGLYRGDSLNVFNCHRSIRPSRPALVCWMGFTSYQAAFLCLGMAIQTLVFFICILFAVFLIIIPILWGTNLMLFHIIGNLWPFWLTLVLAALIQHVASRFLFIRKDGGTRDLNNRGSLFLLSYILFLVNVMIGVVLGIWRVVITALFNIVHLGRLDISLLNRNVEAFDPGYRCYSHYLKIEVSQSHPVMKAFCGLLLQSSGQDGLSAQRIRDAEEGIQLVQQEKKQNKVSNAKRARAHWQLLYTLVNNPSLVGSRKHFQCQSSESFINGALSRTSKEGSKKDGSVNEPSKEAESAAASN.

Over 1–38 (MSAETVNNYDYSDWYENAAPTKAPVEVIPPCDPTADEG) the chain is Extracellular. A helical transmembrane segment spans residues 39–59 (LFHICIAAISLVVMLVLAILA). Residues 60 to 87 (RRQKLSDNQRGLTGLLSPVNFLDHTQHK) lie on the Cytoplasmic side of the membrane. A helical membrane pass occupies residues 88–108 (GLAVAVYGVLFCKLVGMVLSH). The Extracellular portion of the chain corresponds to 109–121 (HPLPFTKEVANKE). The helical transmembrane segment at 122-142 (FWMILALLYYPALYYPLLACG) threads the bilayer. Residues 143 to 145 (TLH) lie on the Cytoplasmic side of the membrane. A helical membrane pass occupies residues 146 to 166 (NKVGYVLGSLLSWTHFGILVW). Residues 167-182 (QKVDCPKTPQIYKYYA) lie on the Extracellular side of the membrane. A helical membrane pass occupies residues 183 to 203 (LFGSLPQIACLAFLSFQYPLL). Topologically, residues 204-274 (LFKGLQNTET…PEDVFRFPLK (71 aa)) are cytoplasmic. The helical transmembrane segment at 275–295 (LAISVVVAFIALYQMALLLIS) threads the bilayer. Residues 296–346 (GVLPTLHIVRRGVDENIAFLLAGFNIILSNDRQEVVRIVVYYLWCVEICYV) are Extracellular-facing. The helical transmembrane segment at 347–367 (SAVTLSCLVNLLMLMRSMVLH) threads the bilayer. The Cytoplasmic portion of the chain corresponds to 368-401 (RSNLKGLYRGDSLNVFNCHRSIRPSRPALVCWMG). The chain crosses the membrane as a helical span at residues 402-422 (FTSYQAAFLCLGMAIQTLVFF). Over 423 to 452 (ICILFAVFLIIIPILWGTNLMLFHIIGNLW) the chain is Extracellular. The chain crosses the membrane as a helical span at residues 453–473 (PFWLTLVLAALIQHVASRFLF). The Cytoplasmic segment spans residues 474–488 (IRKDGGTRDLNNRGS). An intramembrane region (helical) is located at residues 489–526 (LFLLSYILFLVNVMIGVVLGIWRVVITALFNIVHLGRL). At 527 to 670 (DISLLNRNVE…KEAESAAASN (144 aa)) the chain is on the cytoplasmic side. An interaction with calmodulin region spans residues 600 to 626 (VSNAKRARAHWQLLYTLVNNPSLVGSR). A disordered region spans residues 640 to 670 (GALSRTSKEGSKKDGSVNEPSKEAESAAASN). Positions 645–664 (TSKEGSKKDGSVNEPSKEAE) are enriched in basic and acidic residues.

Homodimer. Interacts (via C-terminus) with calmodulin.

Its subcellular location is the cell membrane. Its function is as follows. Retinol transporter. Accepts retinol from the extracellular retinol-binding protein rbp4, mediates retinol transport across the cell membrane, and then transmits retinol to the cytoplasmic retinol-binding protein rbp1. Required for normal vitamin A homeostasis. This Danio rerio (Zebrafish) protein is Receptor for retinol uptake stra6.